We begin with the raw amino-acid sequence, 149 residues long: SsrA-binding protein (149 aa).

The disordered stretch occupies residues 121–149; sequence GKKQHDKRAAEKDREWQREKQRLVRSAQH. The span at 127–142 shows a compositional bias: basic and acidic residues; the sequence is KRAAEKDREWQREKQR.

This sequence belongs to the SmpB family.

The protein resides in the cytoplasm. Its function is as follows. Required for rescue of stalled ribosomes mediated by trans-translation. Binds to transfer-messenger RNA (tmRNA), required for stable association of tmRNA with ribosomes. tmRNA and SmpB together mimic tRNA shape, replacing the anticodon stem-loop with SmpB. tmRNA is encoded by the ssrA gene; the 2 termini fold to resemble tRNA(Ala) and it encodes a 'tag peptide', a short internal open reading frame. During trans-translation Ala-aminoacylated tmRNA acts like a tRNA, entering the A-site of stalled ribosomes, displacing the stalled mRNA. The ribosome then switches to translate the ORF on the tmRNA; the nascent peptide is terminated with the 'tag peptide' encoded by the tmRNA and targeted for degradation. The ribosome is freed to recommence translation, which seems to be the essential function of trans-translation. This Thiobacillus denitrificans (strain ATCC 25259 / T1) protein is SsrA-binding protein.